The chain runs to 438 residues: Na(+)/H(+) antiporter NhaA 2 (438 aa).

Transmembrane regions (helical) follow at residues 21-41 (SGGI…NSPW), 66-86 (LHHW…GLEL), 102-122 (MLPI…FHFI), 130-150 (KGWG…LALL), 160-180 (IFLT…IALF), 183-203 (GELA…LIAG), 206-226 (LGVQ…VVLL), 308-328 (WVIF…VLQL), 341-361 (LGVA…FSWI), 376-396 (WMDV…SLFI), and 410-430 (AKLG…TVLS).

It belongs to the NhaA Na(+)/H(+) (TC 2.A.33) antiporter family.

It localises to the cell inner membrane. The catalysed reaction is Na(+)(in) + 2 H(+)(out) = Na(+)(out) + 2 H(+)(in). In terms of biological role, na(+)/H(+) antiporter that extrudes sodium in exchange for external protons. The polypeptide is Na(+)/H(+) antiporter NhaA 2 (Syntrophotalea carbinolica (strain DSM 2380 / NBRC 103641 / GraBd1) (Pelobacter carbinolicus)).